Consider the following 336-residue polypeptide: Holliday junction branch migration complex subunit RuvB (336 aa).

Residues 4–184 form a large ATPase domain (RuvB-L) region; that stretch reads ADRLISASGG…FGIVQRLEFY (181 aa). ATP is bound by residues Ile-23, Arg-24, Gly-65, Lys-68, Thr-69, Thr-70, 131 to 133, Arg-174, Tyr-184, and Arg-221; that span reads EDY. Position 69 (Thr-69) interacts with Mg(2+). Residues 185 to 255 form a small ATPAse domain (RuvB-S) region; it reads NVKDLTDIVA…IAARAMDMLD (71 aa). The tract at residues 258-336 is head domain (RuvB-H); sequence NEGFDFMDRK…HFGLQRPDEG (79 aa). Arg-313 and Arg-318 together coordinate DNA.

This sequence belongs to the RuvB family. Homohexamer. Forms an RuvA(8)-RuvB(12)-Holliday junction (HJ) complex. HJ DNA is sandwiched between 2 RuvA tetramers; dsDNA enters through RuvA and exits via RuvB. An RuvB hexamer assembles on each DNA strand where it exits the tetramer. Each RuvB hexamer is contacted by two RuvA subunits (via domain III) on 2 adjacent RuvB subunits; this complex drives branch migration. In the full resolvosome a probable DNA-RuvA(4)-RuvB(12)-RuvC(2) complex forms which resolves the HJ.

It localises to the cytoplasm. It catalyses the reaction ATP + H2O = ADP + phosphate + H(+). The RuvA-RuvB-RuvC complex processes Holliday junction (HJ) DNA during genetic recombination and DNA repair, while the RuvA-RuvB complex plays an important role in the rescue of blocked DNA replication forks via replication fork reversal (RFR). RuvA specifically binds to HJ cruciform DNA, conferring on it an open structure. The RuvB hexamer acts as an ATP-dependent pump, pulling dsDNA into and through the RuvAB complex. RuvB forms 2 homohexamers on either side of HJ DNA bound by 1 or 2 RuvA tetramers; 4 subunits per hexamer contact DNA at a time. Coordinated motions by a converter formed by DNA-disengaged RuvB subunits stimulates ATP hydrolysis and nucleotide exchange. Immobilization of the converter enables RuvB to convert the ATP-contained energy into a lever motion, pulling 2 nucleotides of DNA out of the RuvA tetramer per ATP hydrolyzed, thus driving DNA branch migration. The RuvB motors rotate together with the DNA substrate, which together with the progressing nucleotide cycle form the mechanistic basis for DNA recombination by continuous HJ branch migration. Branch migration allows RuvC to scan DNA until it finds its consensus sequence, where it cleaves and resolves cruciform DNA. This chain is Holliday junction branch migration complex subunit RuvB, found in Aeromonas hydrophila subsp. hydrophila (strain ATCC 7966 / DSM 30187 / BCRC 13018 / CCUG 14551 / JCM 1027 / KCTC 2358 / NCIMB 9240 / NCTC 8049).